A 417-amino-acid polypeptide reads, in one-letter code: Serine hydroxymethyltransferase (417 aa).

(6S)-5,6,7,8-tetrahydrofolate-binding positions include Leu-121 and 125-127 (GHL). Lys-229 bears the N6-(pyridoxal phosphate)lysine mark. 355 to 357 (SPF) contacts (6S)-5,6,7,8-tetrahydrofolate.

This sequence belongs to the SHMT family. Homodimer. Requires pyridoxal 5'-phosphate as cofactor.

The protein resides in the cytoplasm. It catalyses the reaction (6R)-5,10-methylene-5,6,7,8-tetrahydrofolate + glycine + H2O = (6S)-5,6,7,8-tetrahydrofolate + L-serine. It functions in the pathway one-carbon metabolism; tetrahydrofolate interconversion. Its pathway is amino-acid biosynthesis; glycine biosynthesis; glycine from L-serine: step 1/1. Functionally, catalyzes the reversible interconversion of serine and glycine with tetrahydrofolate (THF) serving as the one-carbon carrier. This reaction serves as the major source of one-carbon groups required for the biosynthesis of purines, thymidylate, methionine, and other important biomolecules. Also exhibits THF-independent aldolase activity toward beta-hydroxyamino acids, producing glycine and aldehydes, via a retro-aldol mechanism. This is Serine hydroxymethyltransferase from Stenotrophomonas maltophilia (strain R551-3).